The sequence spans 729 residues: MLYKGDTLYLNWLEDGIAELVFDAPGSVNKLDTATVASLGHALDVLEKQHDLKALLLRSEKAAFIVGADITEFLSLFQVPAEQLSQWLHFANSVFNRLEDLPVPTLCAINGYALGGGCECVLATDFRLATPDARIGLPETKLGIMPGFGGSVRLPRLLGADSALEIIAAGKDITADAALKVGLVDAVVKPEKLIEGALRMLRQAIDGELDWQARRQPKLEPLRLSKIEATMSFTIAKGMVMQTAGKHYPAPMTAVKTIEAAAGLGRDEALALENKSFVPLARSSEARALVGIFLNDQYVKGLAKKLTKETETPKQAAVLGAGIMGGGIAYQSAWKGVPVIMKDINEKSLTLGISEASKLLNKQLERGKIDGLKLAGVIATIHPTLDYAGFERADVVVEAVVENPKVKKAVLAETEEKVRPDTVIASNTSTIPISELASVLKRPENFCGMHFFNPVHRMPLVEVIRGEKTSDATIAKVVSWASKMGKTPIVVNDCPGFFVNRVLFPYFAGFSQLLRDGADFRQIDKVMEKQFGWPMGPAYLLDVVGIDTAHHAQAVMAAGFPQRMQKDYRDAIDALFDAGRFGQKNGKGFYAYQEDSKGKPRKVPDDAVDSLLAEVSQPKRAFSDEEIVARMMIPMVNEVVRCLEEGIIASPAEADMALVYGLGFPPFHGGAFRWLDTQGSAKYLDMAQHYQHLGPLYEAPAGLRDKASHNAPYYPQVEPAQPVGELQTA.

Residues 1–189 form an enoyl-CoA hydratase/isomerase region; the sequence is MLYKGDTLYL…KVGLVDAVVK (189 aa). Asp296 provides a ligand contact to substrate. The interval 311-729 is 3-hydroxyacyl-CoA dehydrogenase; that stretch reads ETPKQAAVLG…AQPVGELQTA (419 aa). Residues Met324, Asp343, 400–402, Lys407, and Ser429 each bind NAD(+); that span reads VVE. His450 functions as the For 3-hydroxyacyl-CoA dehydrogenase activity in the catalytic mechanism. Asn453 serves as a coordination point for NAD(+). Asn500 and Tyr660 together coordinate substrate. The interval 708 to 729 is disordered; the sequence is SHNAPYYPQVEPAQPVGELQTA.

In the N-terminal section; belongs to the enoyl-CoA hydratase/isomerase family. This sequence in the C-terminal section; belongs to the 3-hydroxyacyl-CoA dehydrogenase family. Heterotetramer of two alpha chains (FadB) and two beta chains (FadA).

It catalyses the reaction a (3S)-3-hydroxyacyl-CoA + NAD(+) = a 3-oxoacyl-CoA + NADH + H(+). It carries out the reaction a (3S)-3-hydroxyacyl-CoA = a (2E)-enoyl-CoA + H2O. The catalysed reaction is a 4-saturated-(3S)-3-hydroxyacyl-CoA = a (3E)-enoyl-CoA + H2O. The enzyme catalyses (3S)-3-hydroxybutanoyl-CoA = (3R)-3-hydroxybutanoyl-CoA. It catalyses the reaction a (3Z)-enoyl-CoA = a 4-saturated (2E)-enoyl-CoA. It carries out the reaction a (3E)-enoyl-CoA = a 4-saturated (2E)-enoyl-CoA. It functions in the pathway lipid metabolism; fatty acid beta-oxidation. Involved in the aerobic and anaerobic degradation of long-chain fatty acids via beta-oxidation cycle. Catalyzes the formation of 3-oxoacyl-CoA from enoyl-CoA via L-3-hydroxyacyl-CoA. It can also use D-3-hydroxyacyl-CoA and cis-3-enoyl-CoA as substrate. This is Fatty acid oxidation complex subunit alpha from Cronobacter sakazakii (strain ATCC BAA-894) (Enterobacter sakazakii).